The sequence spans 195 residues: ATP-dependent Clp protease proteolytic subunit (195 aa).

The active-site Nucleophile is the Ser98. Residue His123 is part of the active site.

Belongs to the peptidase S14 family. In terms of assembly, fourteen ClpP subunits assemble into 2 heptameric rings which stack back to back to give a disk-like structure with a central cavity, resembling the structure of eukaryotic proteasomes.

It localises to the cytoplasm. The enzyme catalyses Hydrolysis of proteins to small peptides in the presence of ATP and magnesium. alpha-casein is the usual test substrate. In the absence of ATP, only oligopeptides shorter than five residues are hydrolyzed (such as succinyl-Leu-Tyr-|-NHMec, and Leu-Tyr-Leu-|-Tyr-Trp, in which cleavage of the -Tyr-|-Leu- and -Tyr-|-Trp bonds also occurs).. Cleaves peptides in various proteins in a process that requires ATP hydrolysis. Has a chymotrypsin-like activity. Plays a major role in the degradation of misfolded proteins. The polypeptide is ATP-dependent Clp protease proteolytic subunit (Alkaliphilus oremlandii (strain OhILAs) (Clostridium oremlandii (strain OhILAs))).